We begin with the raw amino-acid sequence, 154 residues long: MRYSFVIQWDFETVYTGVNSTTNLAFSVKAMTTNFANLQELQDSLVLRGQNLTTQLFWKPTVKRLVLGNNNDLTTVAKAAVGDNLFTTQANLTKSVLDQTVLKEAESRFEATVLKPFIEARQKALAEHQAHQKVLEEQRQKQLEELKQKQKEAE.

This sequence belongs to the MG032/MG096/MG288 family.

This is an uncharacterized protein from Mycoplasma pneumoniae (strain ATCC 29342 / M129 / Subtype 1) (Mycoplasmoides pneumoniae).